The sequence spans 497 residues: Cytochrome P450 71A18 (497 aa).

The chain crosses the membrane as a helical span at residues Thr4–Leu24. Cys439 provides a ligand contact to heme.

It belongs to the cytochrome P450 family. It depends on heme as a cofactor.

The protein localises to the membrane. The chain is Cytochrome P450 71A18 (CYP71A18) from Arabidopsis thaliana (Mouse-ear cress).